The sequence spans 452 residues: MAAATLLRATPRFSGLCASPTPFLQGRLRPLKAPASPFLCRGLAVEAKKTYVRDKPHVNVGTIGHVDHGKTTLTAAITKILAEGGGAKFKKYEEIDNAPEERARGITINAAHVEYSTAARHYAHTDCPGHADYVKNMITGTAPLDGCILVVAANDGPMPQTREHLLLAKQIGVEHVVVYVNKADAVQDSEMVELVELEIRELLTEFGYKGEETPVIVGSALCALEQRDPELGVKSVQKLLDAVDTYIPVPTRDLEKPFLLPVESVYSIPGRGTVVTGTLERGILKKGDECELLGHNKNIRTVVTGIEMFHKSLERAEAGDNLGALVRGLKREDLRRGLVMVKPGSIQPHQKVEAQVYILSKEEGGRHKPFVSHFMPVMFSLTWDMACRVILPPGKELAMPGEDLKLSLILRQPMILEKGQRFTLRDGNKTIGTGLVTDVPAMTEEDKNIKWS.

The transit peptide at 1–43 directs the protein to the mitochondrion; it reads MAAATLLRATPRFSGLCASPTPFLQGRLRPLKAPASPFLCRGL. In terms of domain architecture, tr-type G spans 55 to 251; that stretch reads KPHVNVGTIG…AVDTYIPVPT (197 aa). The G1 stretch occupies residues 64–71; sequence GHVDHGKT. Positions 67, 69, 70, 71, and 72 each coordinate GTP. Thr71 contacts Mg(2+). Lys79 carries the post-translational modification N6-acetyllysine. Lys88 is modified (N6-acetyllysine; alternate). Lys88 carries the N6-succinyllysine; alternate modification. A G2 region spans residues 105-109; sequence GITIN. The tract at residues 126-129 is G3; sequence DCPG. GTP-binding residues include Asn181, Asp184, Ser219, Ala220, and Leu221. Residues 181 to 184 are G4; sequence NKAD. A G5 region spans residues 219–221; sequence SAL. The residue at position 234 (Lys234) is an N6-succinyllysine. N6-acetyllysine is present on Lys256. At Thr278 the chain carries Phosphothreonine. Lys286 is modified (N6-succinyllysine). Ser312 is modified (phosphoserine). N6-acetyllysine occurs at positions 361 and 418.

This sequence belongs to the TRAFAC class translation factor GTPase superfamily. Classic translation factor GTPase family. EF-Tu/EF-1A subfamily. Interacts with NLRX1. Interacts with ATG16L1.

Its subcellular location is the mitochondrion. It carries out the reaction GTP + H2O = GDP + phosphate + H(+). In terms of biological role, GTP hydrolase that promotes the GTP-dependent binding of aminoacyl-tRNA to the A-site of ribosomes during protein biosynthesis. Plays a role in the regulation of autophagy and innate immunity. Recruits ATG5-ATG12 and NLRX1 at mitochondria and serves as a checkpoint of the RIGI-MAVS pathway. In turn, inhibits RLR-mediated type I interferon while promoting autophagy. This chain is Elongation factor Tu, mitochondrial, found in Rattus norvegicus (Rat).